The following is a 513-amino-acid chain: Xylose import ATP-binding protein XylG (513 aa).

2 consecutive ABC transporter domains span residues 5 to 242 (LEMK…VGRE) and 259 to 505 (LRIE…LRSE). 37 to 44 (GENGSGKS) is an ATP binding site.

Belongs to the ABC transporter superfamily. Xylose importer (TC 3.A.1.2.4) family. The complex is composed of two ATP-binding proteins (XylG), two transmembrane proteins (XylH) and a solute-binding protein (XylF).

It is found in the cell inner membrane. The enzyme catalyses D-xylose(out) + ATP + H2O = D-xylose(in) + ADP + phosphate + H(+). Its function is as follows. Part of the ABC transporter complex XylFGH involved in xylose import. Responsible for energy coupling to the transport system. The XylFGH system can also transport ribose in absence of xylose. The sequence is that of Xylose import ATP-binding protein XylG from Escherichia coli (strain K12).